A 62-amino-acid chain; its full sequence is Small, acid-soluble spore protein H 1 (62 aa).

Belongs to the SspH family.

The protein localises to the spore core. The chain is Small, acid-soluble spore protein H 1 from Clostridium botulinum (strain ATCC 19397 / Type A).